Reading from the N-terminus, the 178-residue chain is Mediator of RNA polymerase II transcription subunit 28 (178 aa).

The disordered stretch occupies residues 1–43; the sequence is MAASLGGMFAGQPPGPPPPPPGLPGQASLLQAAPGAPRPSNST. Pro residues predominate over residues 13–23; the sequence is PPGPPPPPPGL. Residues 109 to 145 adopt a coiled-coil conformation; it reads QVIKEDVSELRSELQRKDALVQKHLTKLRHWQQVLED.

Belongs to the Mediator complex subunit 28 family. In terms of assembly, forms a ternary complex with NF2/merlin and GRB2. Binds to actin. Component of the Mediator complex, which is probably composed of MED1, MED4, MED6, MED7, MED8, MED9, MED10, MED11, MED12, MED13, MED13L, MED14, MED15, MED16, MED17, MED18, MED19, MED20, MED21, MED22, MED23, MED24, MED25, MED26, MED27, MED29, MED30, MED31, CCNC, CDK8 and CDC2L6/CDK11. The MED12, MED13, CCNC and CDK8 subunits form a distinct module termed the CDK8 module. Mediator containing the CDK8 module is less active than Mediator lacking this module in supporting transcriptional activation. Individual preparations of the Mediator complex lacking one or more distinct subunits have been variously termed ARC, CRSP, DRIP, PC2, SMCC and TRAP.

The protein resides in the nucleus. The protein localises to the cytoplasm. It is found in the membrane. May be part of a complex containing NF2/merlin that participates in cellular signaling to the actin cytoskeleton downstream of tyrosine kinase signaling pathways. Component of the Mediator complex, a coactivator involved in the regulated transcription of nearly all RNA polymerase II-dependent genes. Mediator functions as a bridge to convey information from gene-specific regulatory proteins to the basal RNA polymerase II transcription machinery. Mediator is recruited to promoters by direct interactions with regulatory proteins and serves as a scaffold for the assembly of a functional preinitiation complex with RNA polymerase II and the general transcription factors. This chain is Mediator of RNA polymerase II transcription subunit 28 (Med28), found in Rattus norvegicus (Rat).